We begin with the raw amino-acid sequence, 1297 residues long: Phosphoribosylformylglycinamidine synthase (1297 aa).

Residues glycine 307–aspartate 318 and alanine 678 each bind ATP. Residues glutamate 718, asparagine 722, and aspartate 886 each contribute to the Mg(2+) site. The region spanning methionine 1044–alanine 1297 is the Glutamine amidotransferase type-1 domain. Cysteine 1137 (nucleophile) is an active-site residue. Residues histidine 1262 and glutamate 1264 contribute to the active site.

In the N-terminal section; belongs to the FGAMS family. As to quaternary structure, monomer.

It localises to the cytoplasm. It catalyses the reaction N(2)-formyl-N(1)-(5-phospho-beta-D-ribosyl)glycinamide + L-glutamine + ATP + H2O = 2-formamido-N(1)-(5-O-phospho-beta-D-ribosyl)acetamidine + L-glutamate + ADP + phosphate + H(+). The protein operates within purine metabolism; IMP biosynthesis via de novo pathway; 5-amino-1-(5-phospho-D-ribosyl)imidazole from N(2)-formyl-N(1)-(5-phospho-D-ribosyl)glycinamide: step 1/2. Functionally, phosphoribosylformylglycinamidine synthase involved in the purines biosynthetic pathway. Catalyzes the ATP-dependent conversion of formylglycinamide ribonucleotide (FGAR) and glutamine to yield formylglycinamidine ribonucleotide (FGAM) and glutamate. This is Phosphoribosylformylglycinamidine synthase from Vibrio vulnificus (strain YJ016).